We begin with the raw amino-acid sequence, 421 residues long: Solute carrier family 35 member F3 (421 aa).

A disordered region spans residues 25–45; it reads EGEERPRDSPGPAEAQAPAGV. The next 10 membrane-spanning stretches (helical) occupy residues 66-86, 98-118, 149-169, 179-199, 208-228, 232-252, 266-286, 305-325, 326-346, and 352-372; these read IFWG…STQL, FTLT…YYVG, VFFT…YLYL, DVSV…WIVL, IVAA…DGFH, VIGI…KVLF, LFLS…PIIL, LCGF…GIAV, TYPT…AVID, and IVFN…FLLL. The disordered stretch occupies residues 393-421; that stretch reads KKEEPAEGAADLSSGPQSKNRRARPSFAR. Over residues 411 to 421 the composition is skewed to basic residues; that stretch reads KNRRARPSFAR.

The protein belongs to the SLC35F solute transporter family. As to expression, expressed at the highest levels in the adult cerebellum.

The protein localises to the membrane. It carries out the reaction thiamine(in) = thiamine(out). Its function is as follows. Mediates thiamine transport. In Homo sapiens (Human), this protein is Solute carrier family 35 member F3.